Consider the following 141-residue polypeptide: Hemoglobin subunit alpha (141 aa).

The 141-residue stretch at 1–141 (VLSSDDKCNV…VSSVLTSKYR (141 aa)) folds into the Globin domain. Histidine 58 contacts O2. Residue histidine 87 coordinates heme b.

Belongs to the globin family. As to quaternary structure, heterotetramer of two alpha chains and two beta chains. In terms of tissue distribution, red blood cells.

Involved in oxygen transport from the lung to the various peripheral tissues. The sequence is that of Hemoglobin subunit alpha (HBA) from Crocodylus niloticus (Nile crocodile).